We begin with the raw amino-acid sequence, 490 residues long: ATP synthase subunit beta, plastid (490 aa).

170-177 (GGAGVGKT) contacts ATP.

It belongs to the ATPase alpha/beta chains family. As to quaternary structure, F-type ATPases have 2 components, CF(1) - the catalytic core - and CF(0) - the membrane proton channel. CF(1) has five subunits: alpha(3), beta(3), gamma(1), delta(1), epsilon(1). CF(0) has four main subunits: a(1), b(1), b'(1) and c(9-12).

The protein resides in the plastid membrane. It carries out the reaction ATP + H2O + 4 H(+)(in) = ADP + phosphate + 5 H(+)(out). Produces ATP from ADP in the presence of a proton gradient across the membrane. The catalytic sites are hosted primarily by the beta subunits. This chain is ATP synthase subunit beta, plastid (atpB), found in Cuscuta japonica (Japanese dodder).